The following is a 337-amino-acid chain: tRNA-dihydrouridine synthase B (337 aa).

FMN contacts are provided by residues Pro19–Ala21 and Gln73. Cys103 functions as the Proton donor in the catalytic mechanism. FMN is bound by residues Lys142, Asn203–Asp205, and Gly227–Arg228.

The protein belongs to the Dus family. DusB subfamily. It depends on FMN as a cofactor.

The enzyme catalyses a 5,6-dihydrouridine in tRNA + NAD(+) = a uridine in tRNA + NADH + H(+). It catalyses the reaction a 5,6-dihydrouridine in tRNA + NADP(+) = a uridine in tRNA + NADPH + H(+). Catalyzes the synthesis of 5,6-dihydrouridine (D), a modified base found in the D-loop of most tRNAs, via the reduction of the C5-C6 double bond in target uridines. The protein is tRNA-dihydrouridine synthase B of Pseudomonas syringae pv. tomato (strain ATCC BAA-871 / DC3000).